Reading from the N-terminus, the 199-residue chain is Holliday junction branch migration complex subunit RuvA (199 aa).

A domain I region spans residues Met-1 to Ser-63. The domain II stretch occupies residues Asp-64 to Ala-142. A flexible linker region spans residues Ala-143–Val-150. Residues Val-150–Lys-199 are domain III.

Belongs to the RuvA family. Homotetramer. Forms an RuvA(8)-RuvB(12)-Holliday junction (HJ) complex. HJ DNA is sandwiched between 2 RuvA tetramers; dsDNA enters through RuvA and exits via RuvB. An RuvB hexamer assembles on each DNA strand where it exits the tetramer. Each RuvB hexamer is contacted by two RuvA subunits (via domain III) on 2 adjacent RuvB subunits; this complex drives branch migration. In the full resolvosome a probable DNA-RuvA(4)-RuvB(12)-RuvC(2) complex forms which resolves the HJ.

Its subcellular location is the cytoplasm. In terms of biological role, the RuvA-RuvB-RuvC complex processes Holliday junction (HJ) DNA during genetic recombination and DNA repair, while the RuvA-RuvB complex plays an important role in the rescue of blocked DNA replication forks via replication fork reversal (RFR). RuvA specifically binds to HJ cruciform DNA, conferring on it an open structure. The RuvB hexamer acts as an ATP-dependent pump, pulling dsDNA into and through the RuvAB complex. HJ branch migration allows RuvC to scan DNA until it finds its consensus sequence, where it cleaves and resolves the cruciform DNA. This Acinetobacter baumannii (strain ACICU) protein is Holliday junction branch migration complex subunit RuvA.